Reading from the N-terminus, the 257-residue chain is BTB/POZ domain-containing protein kctd15-like (257 aa).

Phosphoserine occurs at positions 9 and 12. Positions 30-100 (APVHIDVGGH…LRTSKLLLPE (71 aa)) constitute a BTB domain.

This chain is BTB/POZ domain-containing protein kctd15-like (kctd15l), found in Danio rerio (Zebrafish).